Here is a 111-residue protein sequence, read N- to C-terminus: MKWIVIDTVIQPSCGISFSVIWSKIKLIIWYQSDAFLPPESIFTLTHTGIMLNNKVLPVTIYNVVPFNKTFWNLIKNSQECPTNTDNVLNECFNNRCTLQICPYGLKQQSP.

This sequence belongs to the IraM/RssC family.

It localises to the cytoplasm. Inhibits RpoS proteolysis by regulating RssB activity, thereby increasing the stability of the sigma stress factor RpoS during magnesium starvation. This chain is Anti-adapter protein IraM, found in Escherichia coli O127:H6 (strain E2348/69 / EPEC).